A 693-amino-acid chain; its full sequence is Kinesin-like protein KIFC1 (693 aa).

2 disordered regions span residues 1–24 (MRGRGSRDTGTQSAAFASRPVRTT) and 48–156 (VKSS…KRPA). Composition is skewed to low complexity over residues 49–59 (KSSSRLPLPGS) and 127–138 (QKPAPAAPAQKP). Ser52 and Ser59 each carry phosphoserine. Positions 165–334 (DLHEELKQYR…QELKGNIRVF (170 aa)) form a coiled coil. The Kinesin motor domain occupies 330–683 (NIRVFCRVRP…LRFASKVNQC (354 aa)). Thr379 carries the phosphothreonine modification. 430–437 (GQTGSGKT) provides a ligand contact to ATP.

Belongs to the TRAFAC class myosin-kinesin ATPase superfamily. Kinesin family. NCD subfamily. Binds NUBP1 and NUBP2. Interacts with PPP1R42.

It is found in the nucleus. It localises to the cytoplasm. The protein localises to the cytoskeleton. The protein resides in the microtubule organizing center. Its subcellular location is the centrosome. It is found in the spindle. It localises to the early endosome. Functionally, minus end-directed microtubule-dependent motor required for bipolar spindle formation. May contribute to movement of early endocytic vesicles. Regulates cilium formation and structure. This Rattus norvegicus (Rat) protein is Kinesin-like protein KIFC1.